A 336-amino-acid chain; its full sequence is Fructose-1,6-bisphosphatase class 1 (336 aa).

Mg(2+) contacts are provided by E90, D112, L114, and D115. Residues 115-118 (DGSS), N211, and K277 contribute to the substrate site. Mg(2+) is bound at residue E283.

This sequence belongs to the FBPase class 1 family. In terms of assembly, homotetramer. It depends on Mg(2+) as a cofactor.

The protein resides in the cytoplasm. It carries out the reaction beta-D-fructose 1,6-bisphosphate + H2O = beta-D-fructose 6-phosphate + phosphate. It functions in the pathway carbohydrate biosynthesis; gluconeogenesis. The sequence is that of Fructose-1,6-bisphosphatase class 1 from Pseudomonas putida (strain W619).